Consider the following 504-residue polypeptide: Phosphoenolpyruvate carboxylase (504 aa).

Polar residues predominate over residues 1–16 (MTSRKIPSIMGTQHPD). The interval 1–21 (MTSRKIPSIMGTQHPDNANAP) is disordered.

It belongs to the PEPCase type 2 family. In terms of assembly, homotetramer. The cofactor is Mg(2+).

The enzyme catalyses oxaloacetate + phosphate = phosphoenolpyruvate + hydrogencarbonate. Functionally, catalyzes the irreversible beta-carboxylation of phosphoenolpyruvate (PEP) to form oxaloacetate (OAA), a four-carbon dicarboxylic acid source for the tricarboxylic acid cycle. The sequence is that of Phosphoenolpyruvate carboxylase from Leuconostoc mesenteroides subsp. mesenteroides (strain ATCC 8293 / DSM 20343 / BCRC 11652 / CCM 1803 / JCM 6124 / NCDO 523 / NBRC 100496 / NCIMB 8023 / NCTC 12954 / NRRL B-1118 / 37Y).